The following is a 154-amino-acid chain: Endoribonuclease YbeY (154 aa).

Zn(2+) is bound by residues His114, His118, and His124.

Belongs to the endoribonuclease YbeY family. Zn(2+) serves as cofactor.

Its subcellular location is the cytoplasm. Its function is as follows. Single strand-specific metallo-endoribonuclease involved in late-stage 70S ribosome quality control and in maturation of the 3' terminus of the 16S rRNA. The polypeptide is Endoribonuclease YbeY (Marinomonas sp. (strain MWYL1)).